A 301-amino-acid polypeptide reads, in one-letter code: MPT51 antigen (301 aa).

The signal sequence occupies residues 1–36; the sequence is MRGLSAVVRVLCVAALAVGVFAAAVLLAGTAGNAKA.

The protein belongs to the mycobacterial A85 antigen family. Homodimer.

The protein localises to the secreted. In terms of biological role, may have a role in host tissue attachment, whereby ligands may include the serum protein fibronectin and small sugars. The sequence is that of MPT51 antigen (mpt51) from Mycobacterium leprae (strain TN).